We begin with the raw amino-acid sequence, 414 residues long: DNA polymerase IV 1 (414 aa).

The UmuC domain occupies 8–189 (IFHIDMNSFY…LPVGEMHGVG (182 aa)). Residues D12 and D108 each contribute to the Mg(2+) site. The active site involves E109. The segment at 391–414 (LKKEESKTKGTSFNKDFFQDEKKS) is disordered.

The protein belongs to the DNA polymerase type-Y family. As to quaternary structure, monomer. Mg(2+) is required as a cofactor.

Its subcellular location is the cytoplasm. It carries out the reaction DNA(n) + a 2'-deoxyribonucleoside 5'-triphosphate = DNA(n+1) + diphosphate. Its function is as follows. Poorly processive, error-prone DNA polymerase involved in untargeted mutagenesis. Copies undamaged DNA at stalled replication forks, which arise in vivo from mismatched or misaligned primer ends. These misaligned primers can be extended by PolIV. Exhibits no 3'-5' exonuclease (proofreading) activity. May be involved in translesion synthesis (TSL), in conjunction with the beta clamp from PolIII. The sequence is that of DNA polymerase IV 1 (dinB1) from Bacillus subtilis (strain 168).